A 262-amino-acid chain; its full sequence is Type II restriction enzyme MspI (262 aa).

It carries out the reaction Endonucleolytic cleavage of DNA to give specific double-stranded fragments with terminal 5'-phosphates.. In terms of biological role, a P subtype restriction enzyme that recognizes the double-stranded sequence 5'-CCGG-3' and cleaves after C-1. The sequence is that of Type II restriction enzyme MspI (mspIR) from Moraxella sp.